A 217-amino-acid chain; its full sequence is Histone H1-gamma, late (217 aa).

Disordered stretches follow at residues 1–21 and 80–217; these read MSAA…HPPS and GKGA…PAKK. The 75-residue stretch at 17 to 91 folds into the H15 domain; it reads AHPPSSQMVV…GASGSFKLGK (75 aa). Residues 104 to 113 show a composition bias toward basic residues; it reads IAAKKAKLAA. Residues 114–123 show a composition bias toward basic and acidic residues; the sequence is KKKEQREKKA. Basic residues predominate over residues 124 to 217; sequence LKTKARKEKV…AKKAAKPAKK (94 aa).

It belongs to the histone H1/H5 family.

It is found in the nucleus. It localises to the chromosome. Histones H1 are necessary for the condensation of nucleosome chains into higher-order structures. The sequence is that of Histone H1-gamma, late from Strongylocentrotus purpuratus (Purple sea urchin).